The primary structure comprises 260 residues: Putative ABC transporter substrate-binding lipoprotein YvgL (260 aa).

The N-terminal stretch at 1-20 (MFKKYSIFIAALTAFLLVAG) is a signal peptide. Cysteine 21 carries N-palmitoyl cysteine lipidation. Cysteine 21 is lipidated: S-diacylglycerol cysteine. Positions 43, 71, 151, 178, and 196 each coordinate molybdate.

This sequence belongs to the bacterial solute-binding protein ModA family.

It localises to the cell membrane. This is Putative ABC transporter substrate-binding lipoprotein YvgL (yvgL) from Bacillus subtilis (strain 168).